The following is a 417-amino-acid chain: Phosphoglycerate kinase (417 aa).

Positions 23, 24, 25, 26, 38, 39, 62, 63, 65, 66, 121, 122, 169, and 170 each coordinate (2R)-3-phosphoglycerate. ADP is bound at residue Gly213. Gly213 provides a ligand contact to CDP. Ala214 and Lys215 together coordinate AMP. Ala214 provides a ligand contact to ATP. Ala214 lines the Mg(2+) pocket. Residue Asp218 coordinates CDP. Position 218 (Asp218) interacts with Mg(2+). Position 219 (Lys219) interacts with AMP. Lys219 is a binding site for ATP. Gly237 provides a ligand contact to ADP. Gly237 serves as a coordination point for CDP. Positions 238 and 312 each coordinate AMP. 2 residues coordinate ATP: Gly238 and Gly312. Gly337 and Phe342 together coordinate CDP. Phe342 contributes to the ADP binding site. Glu343 contacts AMP. The ATP site is built by Glu343, Asp374, and Thr375. Asp374 contacts Mg(2+).

This sequence belongs to the phosphoglycerate kinase family. In terms of assembly, monomer. It depends on Mg(2+) as a cofactor.

It localises to the cytoplasm. It is found in the mitochondrion. It catalyses the reaction (2R)-3-phosphoglycerate + ATP = (2R)-3-phospho-glyceroyl phosphate + ADP. The protein operates within carbohydrate degradation; glycolysis; pyruvate from D-glyceraldehyde 3-phosphate: step 2/5. Functionally, catalyzes one of the two ATP producing reactions in the glycolytic pathway via the reversible conversion of 1,3-diphosphoglycerate to 3-phosphoglycerate. Both L- and D- forms of purine and pyrimidine nucleotides can be used as substrates, but the activity is much lower on pyrimidines. Negatively regulates the biosynthesis of acetyl-CoA from pyruvate in the mitochondrion. The chain is Phosphoglycerate kinase (PGK1) from Candida maltosa (Yeast).